An 84-amino-acid chain; its full sequence is Toluene-4-monooxygenase system, hydroxylase component subunit gamma (84 aa).

The protein belongs to the TmoB/XamoB family. The alkene monooxygenase multicomponent enzyme system is composed of an electron transfer component and a monooxygenase component interacting with the effector protein TmoD. The electron transfer component is composed of a ferredoxin reductase (TmoF) and a ferredoxin (TmoC), and the monooxygenase component is formed by a heterohexamer (dimer of heterotrimers) of two alpha subunits (TmoA), two beta subunits (TmoE) and two gamma subunits (TmoB).

The enzyme catalyses toluene + NADH + O2 + H(+) = 4-methylphenol + NAD(+) + H2O. It participates in xenobiotic degradation; toluene degradation. With respect to regulation, inhibited by Zn(2+) and Cu(2+). Component of the toluene-4-monooxygenase multicomponent enzyme system which catalyzes the O2- and NADH-dependent hydroxylation of toluene to form p-cresol. Also able to convert benzene to phenol, catechol, and 1,2,3-trihydroxybenzene by successive hydroxylations. The sequence is that of Toluene-4-monooxygenase system, hydroxylase component subunit gamma from Ectopseudomonas mendocina (Pseudomonas mendocina).